A 170-amino-acid polypeptide reads, in one-letter code: Copper transporter 1 (170 aa).

Residues 1–29 (MDHDHMHGMPRPSSSSSSSPSSMMNNGSM) form a disordered region. The span at 9 to 29 (MPRPSSSSSSSPSSMMNNGSM) shows a compositional bias: low complexity. The next 2 helical transmembrane spans lie at 65 to 85 (GMYA…EWLA) and 114 to 134 (IGLA…VFLV).

It belongs to the copper transporter (Ctr) (TC 1.A.56) family. SLC31A subfamily. Expressed in the root apex, lateral root primordia, embryo, trichomes, guard cells and pollen grains.

The protein localises to the membrane. Functionally, copper transporter involved in copper acquisition and transport in leaves. Required for copper homeostasis and normal plant growth and development. The chain is Copper transporter 1 (COPT1) from Arabidopsis thaliana (Mouse-ear cress).